The following is a 443-amino-acid chain: 23S rRNA (uracil(1939)-C(5))-methyltransferase RlmD (443 aa).

Residues 10–68 (RVTTKQTLTVTVNSLDPFGQGVAHHQGKAIFIPGALPGEQAEIELTEQKRQYSRGKLKR) form the TRAM domain. [4Fe-4S] cluster contacts are provided by Cys81, Cys87, Cys90, and Cys168. The S-adenosyl-L-methionine site is built by Gln271, Phe300, Asn305, Glu321, Asn348, and Asp369. Cys395 functions as the Nucleophile in the catalytic mechanism.

The protein belongs to the class I-like SAM-binding methyltransferase superfamily. RNA M5U methyltransferase family. RlmD subfamily.

It carries out the reaction uridine(1939) in 23S rRNA + S-adenosyl-L-methionine = 5-methyluridine(1939) in 23S rRNA + S-adenosyl-L-homocysteine + H(+). Catalyzes the formation of 5-methyl-uridine at position 1939 (m5U1939) in 23S rRNA. The protein is 23S rRNA (uracil(1939)-C(5))-methyltransferase RlmD of Yersinia enterocolitica serotype O:8 / biotype 1B (strain NCTC 13174 / 8081).